The following is a 108-amino-acid chain: ATP synthase peripheral stalk subunit F6, mitochondrial (108 aa).

The transit peptide at 1–32 (MTVQRIFRLSSVLRSAVSVHLRRNIGVTAVAF) directs the protein to the mitochondrion. 3 positions are modified to N6-acetyllysine: Lys-41, Lys-46, and Lys-79. Residues Lys-84 and Lys-99 each carry the N6-acetyllysine; alternate modification. Residues Lys-84 and Lys-99 each carry the N6-succinyllysine; alternate modification. Lys-105 carries the post-translational modification N6-acetyllysine. Phosphoserine is present on Ser-108.

It belongs to the eukaryotic ATPase subunit F6 family. Component of the ATP synthase complex composed at least of ATP5F1A/subunit alpha, ATP5F1B/subunit beta, ATP5MC1/subunit c (homooctomer), MT-ATP6/subunit a, MT-ATP8/subunit 8, ATP5ME/subunit e, ATP5MF/subunit f, ATP5MG/subunit g, ATP5MK/subunit k, ATP5MJ/subunit j, ATP5F1C/subunit gamma, ATP5F1D/subunit delta, ATP5F1E/subunit epsilon, ATP5PF/subunit F6, ATP5PB/subunit b, ATP5PD/subunit d, ATP5PO/subunit OSCP. ATP synthase complex consists of a soluble F(1) head domain (subunits alpha(3) and beta(3)) - the catalytic core - and a membrane F(0) domain - the membrane proton channel (subunits c, a, 8, e, f, g, k and j). These two domains are linked by a central stalk (subunits gamma, delta, and epsilon) rotating inside the F1 region and a stationary peripheral stalk (subunits F6, b, d, and OSCP).

The protein resides in the mitochondrion. It is found in the mitochondrion inner membrane. Its function is as follows. Subunit F6, of the mitochondrial membrane ATP synthase complex (F(1)F(0) ATP synthase or Complex V) that produces ATP from ADP in the presence of a proton gradient across the membrane which is generated by electron transport complexes of the respiratory chain. ATP synthase complex consist of a soluble F(1) head domain - the catalytic core - and a membrane F(1) domain - the membrane proton channel. These two domains are linked by a central stalk rotating inside the F(1) region and a stationary peripheral stalk. During catalysis, ATP synthesis in the catalytic domain of F(1) is coupled via a rotary mechanism of the central stalk subunits to proton translocation. In vivo, can only synthesize ATP although its ATP hydrolase activity can be activated artificially in vitro. Part of the complex F(0) domain. Part of the complex F(0) domain and the peripheric stalk, which acts as a stator to hold the catalytic alpha(3)beta(3) subcomplex and subunit a/ATP6 static relative to the rotary elements. This chain is ATP synthase peripheral stalk subunit F6, mitochondrial, found in Rattus norvegicus (Rat).